The following is a 337-amino-acid chain: Inositol 2-dehydrogenase (337 aa).

This sequence belongs to the Gfo/Idh/MocA family. As to quaternary structure, homotetramer.

The catalysed reaction is myo-inositol + NAD(+) = scyllo-inosose + NADH + H(+). Involved in the oxidation of myo-inositol (MI) to 2-keto-myo-inositol (2KMI or 2-inosose). This is Inositol 2-dehydrogenase from Ralstonia nicotianae (strain ATCC BAA-1114 / GMI1000) (Ralstonia solanacearum).